The primary structure comprises 463 residues: UDP-N-acetylmuramoylalanine--D-glutamate ligase (463 aa).

Residue 109-115 (GTDGKST) coordinates ATP.

The protein belongs to the MurCDEF family.

It is found in the cytoplasm. It carries out the reaction UDP-N-acetyl-alpha-D-muramoyl-L-alanine + D-glutamate + ATP = UDP-N-acetyl-alpha-D-muramoyl-L-alanyl-D-glutamate + ADP + phosphate + H(+). The protein operates within cell wall biogenesis; peptidoglycan biosynthesis. Cell wall formation. Catalyzes the addition of glutamate to the nucleotide precursor UDP-N-acetylmuramoyl-L-alanine (UMA). The polypeptide is UDP-N-acetylmuramoylalanine--D-glutamate ligase (Leptospira interrogans serogroup Icterohaemorrhagiae serovar copenhageni (strain Fiocruz L1-130)).